Here is a 689-residue protein sequence, read N- to C-terminus: MNFENLLIEIGTEELPPKSLRKLAESFLANFTEELTKAELSFESAVWHAAPRRLAICINQLALAQADKVVEKRGPAVAQAFDADGNPTKAAMGWARGNGITVEQAERLKTDKGEWLLHQARVVGVETKSLIADMAQRSLDKLPIPKPMRWGSNTTQFIRPVHTVTMLLGSEVVDGELLGIKSDRIIRGHRFMGESSFKLDHADNYLVALKEKGKVLADYEARKAIIKTDAEAAAAKIGGVADLEDDLLEEVTSLVEWPVVLTASFEEKFLDVPAEALVYTMKGDQKYFPVFDNAGQLLPNFIFVTNIESKDPQQIIAGNEKVVRPRLADAEFFFETDKKDTLEARLTSLETVVFQKQLGTIKQRVERISAMAGYIATSIDANSEEAARAGLLSKSDLMTNMVMEFTDLQGTMGMHYARLNGETEAVAVALSEQYKPKFSGDTVPTAPISICVALAEKLDTLVGIFGIGQAPKGAADPFALRRAAIGVLRICLENNLPLDLVDLIAKAQELHGENLTNADVAEQVLEFFMARFRAWYQDQGVSVDVILAVLARRPTAPADFESRIKAVAHFRTLEQASALAAANKRVSNILAKVEGELPAAIDDKLLVEAAEKALAEKLAELQPQLAPLFAAANYQEALALLASLRESVDTFFEDVMVMADDEALKNNRLALLSSLREQFLHAADISLLQ.

The protein belongs to the class-II aminoacyl-tRNA synthetase family. Tetramer of two alpha and two beta subunits.

Its subcellular location is the cytoplasm. The catalysed reaction is tRNA(Gly) + glycine + ATP = glycyl-tRNA(Gly) + AMP + diphosphate. The chain is Glycine--tRNA ligase beta subunit from Shewanella pealeana (strain ATCC 700345 / ANG-SQ1).